Consider the following 179-residue polypeptide: Large ribosomal subunit protein uL6 (179 aa).

Belongs to the universal ribosomal protein uL6 family. In terms of assembly, part of the 50S ribosomal subunit.

This protein binds to the 23S rRNA, and is important in its secondary structure. It is located near the subunit interface in the base of the L7/L12 stalk, and near the tRNA binding site of the peptidyltransferase center. The polypeptide is Large ribosomal subunit protein uL6 (Fructilactobacillus sanfranciscensis (Lactobacillus sanfranciscensis)).